The primary structure comprises 56 residues: Large ribosomal subunit protein bL33A (56 aa).

This sequence belongs to the bacterial ribosomal protein bL33 family.

The polypeptide is Large ribosomal subunit protein bL33A (Nocardia farcinica (strain IFM 10152)).